We begin with the raw amino-acid sequence, 404 residues long: MATVTAPMNMWSVRIVNGIFVLSNKKPLNLPAHLSQLNIPYSVHFIVDSLASFGLLSSLFSLDQVKQSCALLVQHKPNDQCTVLPTCVLDLEFDITVYVRSRQRVLQPGALQLALIFIKPVNGSEMAWDVRDPPETMVGQRLYENVSQGTVKALETPDHLLLTGEAIGRSDGTYDMLFKDQKIPCMVNYSNVFASYHSPNEEILPRALEITMLGQKTARLTFRPGHECPSATVSFRAEVRPILQPKVLFSHFLNWIRVNYDCQVMPLYPEQEEVVNAHDWVRFQVNNKFLVSTAVDTPLKVFICGLGQPSFLVADPGIWNPSSTCLLTLHNISNQPVKLRTCEPVAVGLLLYCNDAHLPSRDVCFCSETGRLEWRNCVVDSSQIFSWPHATQAKSLDSPKSMDS.

This is an uncharacterized protein from Alcelaphine herpesvirus 1 (strain C500) (AlHV-1).